Here is a 144-residue protein sequence, read N- to C-terminus: Thyrostimulin alpha-2 subunit (144 aa).

A signal peptide spans 1–41; sequence MGRRDSGRAVAQRYRGVTRGVTVIACLMVVCACVGLCDATG. Cystine bridges form between Cys52/Cys107, Cys66/Cys121, Cys76/Cys136, and Cys80/Cys138.

This sequence belongs to the glycoprotein hormones subunit alpha family. Heterodimer with GPHB5; non-covalently-linked. Expressed by the venom duct.

The protein localises to the secreted. The polypeptide is Thyrostimulin alpha-2 subunit (Conus victoriae (Queen Victoria cone)).